The sequence spans 184 residues: Ribosome-recycling factor (184 aa).

Residues 141–161 (KKNDKAISEDDQRKGQDDVQK) form a disordered region.

It belongs to the RRF family.

It localises to the cytoplasm. Functionally, responsible for the release of ribosomes from messenger RNA at the termination of protein biosynthesis. May increase the efficiency of translation by recycling ribosomes from one round of translation to another. The polypeptide is Ribosome-recycling factor (Solidesulfovibrio magneticus (strain ATCC 700980 / DSM 13731 / RS-1) (Desulfovibrio magneticus)).